We begin with the raw amino-acid sequence, 162 residues long: Caveolin-2 (162 aa).

Over 1 to 86 the chain is Cytoplasmic; the sequence is MGLESEKADV…FEISKYVLYK (86 aa). Tyrosine 19 bears the Phosphotyrosine mark. A phosphoserine mark is found at serine 20, serine 23, and serine 36. Positions 87–107 form an intramembrane region, helical; sequence FLTFFLAIPLAFAAGILFAIL. Residues 108–162 are Cytoplasmic-facing; that stretch reads SCLHIWIIMPFVKTCLMVLPSVQTIWKSVTDVVIAPLCTSVGRSFSSVSLQLSQD.

Belongs to the caveolin family. In terms of assembly, monomer or homodimer. Interacts with CAV1; the interaction forms a stable heterooligomeric complex that is required for targeting to lipid rafts and for caveolae formation. Tyrosine phosphorylated forms do not form heterooligomers with the Tyr-19-phosphorylated form existing as a monomer or dimer. Interacts (tyrosine phosphorylated form) with the SH2 domain-containing proteins, RASA1, NCK1 and SRC. Interacts (tyrosine phosphorylated form) with INSR. Interacts (Tyr-19 phosphorylated form) with MAPK1 (phosphorylated form); the interaction, promoted by insulin, leads to nuclear location and MAPK1 activation. Interacts with STAT3; the interaction is increased on insulin-induced tyrosine phosphorylation leading to STAT activation. Post-translationally, phosphorylated on serine and tyrosine residues. CAV1 promotes phosphorylation on Ser-23 which then targets the complex to the plasma membrane, lipid rafts and caveolae. Phosphorylation on Ser-36 appears to modulate mitosis in endothelial cells. Phosphorylation on Tyr-19 is required for insulin-induced phosphorylation of MAPK1 and DNA binding of STAT3. Tyrosine phosphorylation is induced by both EGF and insulin.

It is found in the nucleus. The protein localises to the golgi apparatus membrane. It localises to the cell membrane. Its subcellular location is the membrane. The protein resides in the caveola. Its function is as follows. May act as a scaffolding protein within caveolar membranes. Interacts directly with G-protein alpha subunits and can functionally regulate their activity. Acts as an accessory protein in conjunction with CAV1 in targeting to lipid rafts and driving caveolae formation. The Ser-36 phosphorylated form has a role in modulating mitosis in endothelial cells. Positive regulator of cellular mitogenesis of the MAPK signaling pathway. Required for the insulin-stimulated nuclear translocation and activation of MAPK1 and STAT3, and the subsequent regulation of cell cycle progression. The protein is Caveolin-2 (CAV2) of Echinops telfairi (Lesser hedgehog tenrec).